The sequence spans 99 residues: uncharacterized protein (99 aa).

A helical membrane pass occupies residues 6–26; sequence LVCSIVFILFILFYDLKIGTI. The LysM domain maps to 48-95; it reads KTVKVKPGDTVMSIVGSAGSPDDIVKDFEALNPNVKANAIQAGTAYKF.

Its subcellular location is the secreted. It localises to the cell wall. The protein localises to the membrane. This is an uncharacterized protein from Bacillus subtilis (strain 168).